The primary structure comprises 285 residues: MRHTLPLAPQFYVTAPQPCPYIDGRMERKLFTALQGEFAETLNDSLSKQGFRRSQNVLYRPSCADCTACLSARIDVSAFTPSRSQRRTLKRNAVMEREATSPWATEDQYSLFRKYLDARHAEGGMADMDIFEFAAMIEETPVRSRVVEYRQSAEAAPNRKRAPRNLAGVCLTDVLDDGLSMVYSFYDPDLVRQSLGTFMVLDHVEIAREAGLPYVYLGYWVPGSPKMGYKASFSGLEIYKNGEWQPIGDPESHSRDTHPLNVDPIAEQVAKINLPDTLPTDRRKG.

Belongs to the R-transferase family. Bpt subfamily.

The protein localises to the cytoplasm. The enzyme catalyses N-terminal L-glutamyl-[protein] + L-leucyl-tRNA(Leu) = N-terminal L-leucyl-L-glutamyl-[protein] + tRNA(Leu) + H(+). It carries out the reaction N-terminal L-aspartyl-[protein] + L-leucyl-tRNA(Leu) = N-terminal L-leucyl-L-aspartyl-[protein] + tRNA(Leu) + H(+). In terms of biological role, functions in the N-end rule pathway of protein degradation where it conjugates Leu from its aminoacyl-tRNA to the N-termini of proteins containing an N-terminal aspartate or glutamate. The polypeptide is Aspartate/glutamate leucyltransferase (Dinoroseobacter shibae (strain DSM 16493 / NCIMB 14021 / DFL 12)).